The primary structure comprises 213 residues: Kynurenine formamidase (213 aa).

Trp-18 serves as a coordination point for substrate. Residues His-48, His-52, and Asp-54 each contribute to the Zn(2+) site. His-58 functions as the Proton donor/acceptor in the catalytic mechanism. Residues His-160 and Glu-172 each contribute to the Zn(2+) site.

Belongs to the Cyclase 1 superfamily. KynB family. Homodimer. Requires Zn(2+) as cofactor.

It catalyses the reaction N-formyl-L-kynurenine + H2O = L-kynurenine + formate + H(+). It functions in the pathway amino-acid degradation; L-tryptophan degradation via kynurenine pathway; L-kynurenine from L-tryptophan: step 2/2. In terms of biological role, catalyzes the hydrolysis of N-formyl-L-kynurenine to L-kynurenine, the second step in the kynurenine pathway of tryptophan degradation. The sequence is that of Kynurenine formamidase from Burkholderia cenocepacia (strain ATCC BAA-245 / DSM 16553 / LMG 16656 / NCTC 13227 / J2315 / CF5610) (Burkholderia cepacia (strain J2315)).